Consider the following 270-residue polypeptide: UPF0354 protein BCAH820_4810 (270 aa).

The protein belongs to the UPF0354 family.

This is UPF0354 protein BCAH820_4810 from Bacillus cereus (strain AH820).